A 494-amino-acid polypeptide reads, in one-letter code: Fumigaclavine B O-acetyltransferase easN (494 aa).

The protein belongs to the fumigaclavine B O-acetyltransferase family. Monomer.

It catalyses the reaction fumigaclavine B + acetyl-CoA = fumigaclavine A + CoA. Its pathway is alkaloid biosynthesis; ergot alkaloid biosynthesis. In terms of biological role, fumigaclavine B O-acetyltransferase; part of the gene cluster that mediates the biosynthesis of fumiclavanine C, a fungal ergot alkaloid. DmaW catalyzes the first step of ergot alkaloid biosynthesis by condensing dimethylallyl diphosphate (DMAP) and tryptophan to form 4-dimethylallyl-L-tryptophan. The second step is catalyzed by the methyltransferase easF that methylates 4-dimethylallyl-L-tryptophan in the presence of S-adenosyl-L-methionine, resulting in the formation of 4-dimethylallyl-L-abrine. The catalase easC and the FAD-dependent oxidoreductase easE then transform 4-dimethylallyl-L-abrine to chanoclavine-I which is further oxidized by EasD in the presence of NAD(+), resulting in the formation of chanoclavine-I aldehyde. EasA reduces chanoclavine-I aldehyde to dihydrochanoclavine-I aldehyde that spontaneously dehydrates to form 6,8-dimethyl-6,7-didehydroergoline. EasG then catalyzes the reduction of 6,8-dimethyl-6,7-didehydroergoline to form festuclavine. Hydrolysis of festuclavine by easM then leads to the formation of fumigaclavine B which is in turn acetylated by easN to fumigaclavine A. Finally, easL catalyzes the conversion of fumigaclavine A into fumigaclavine C by attaching a dimethylallyl moiety to C-2 of the indole nucleus. The sequence is that of Fumigaclavine B O-acetyltransferase easN from Aspergillus fumigatus (strain ATCC MYA-4609 / CBS 101355 / FGSC A1100 / Af293) (Neosartorya fumigata).